The primary structure comprises 449 residues: Dynein regulatory complex protein 10 (449 aa).

A coiled-coil region spans residues 90 to 125 (AVREHEDLCQVLLENVRCLKEKERQLQEQKEAEEEG). One can recognise an IQ domain in the interval 400–429 (MVRAATLIQALWKGYLVRSLLRSKKKRGKG). Residues 422 to 449 (SKKKRGKGKAKDKEKGKQKGKEKGKGKK) are disordered. The span at 430–449 (KAKDKEKGKQKGKEKGKGKK) shows a compositional bias: basic and acidic residues.

Belongs to the DRC10 family. Component of the nexin-dynein regulatory complex (N-DRC). Interacts with CFAP52.

The protein localises to the cytoplasm. The protein resides in the cytoskeleton. It localises to the flagellum axoneme. Component of the nexin-dynein regulatory complex (N-DRC), a key regulator of ciliary/flagellar motility which maintains the alignment and integrity of the distal axoneme and regulates microtubule sliding in motile axonemes. The chain is Dynein regulatory complex protein 10 (IQCD) from Homo sapiens (Human).